The chain runs to 248 residues: uncharacterized protein (248 aa).

Serine 141 serves as a coordination point for substrate. Catalysis depends on tyrosine 154, which acts as the Proton acceptor.

This sequence belongs to the short-chain dehydrogenases/reductases (SDR) family.

This is an uncharacterized protein from Methylorubrum extorquens (strain ATCC 14718 / DSM 1338 / JCM 2805 / NCIMB 9133 / AM1) (Methylobacterium extorquens).